Here is a 227-residue protein sequence, read N- to C-terminus: Cytidylate kinase (227 aa).

12–20 (GPSGAGKGT) contacts ATP.

Belongs to the cytidylate kinase family. Type 1 subfamily.

It localises to the cytoplasm. It carries out the reaction CMP + ATP = CDP + ADP. The enzyme catalyses dCMP + ATP = dCDP + ADP. In Enterobacter sp. (strain 638), this protein is Cytidylate kinase.